Reading from the N-terminus, the 133-residue chain is T-cell receptor beta chain V region 86T1 (133 aa).

Residues 1–21 form the signal peptide; the sequence is MSCRLLLYVSLCLVETALMNT. Residues 22–113 form a v segment region; that stretch reads KITQSPRYLI…SAVYFCASSH (92 aa). N-linked (GlcNAc...) asparagine glycosylation is found at asparagine 36 and asparagine 75. A disulfide bridge connects residues cysteine 41 and cysteine 109. Residues 114-133 are j segment; that stretch reads GQGVSGNTLYFGEGSRLIVV.

This chain is T-cell receptor beta chain V region 86T1, found in Mus musculus (Mouse).